The chain runs to 275 residues: Exosome complex component RRP40 (275 aa).

An N-acetylalanine modification is found at A2. K151 is covalently cross-linked (Glycyl lysine isopeptide (Lys-Gly) (interchain with G-Cter in SUMO2)).

Belongs to the RRP40 family. As to quaternary structure, component of the RNA exosome core complex (Exo-9), composed of EXOSC1, EXOSC2, EXOSC3, EXOSC4, EXOSC5, EXOSC6, EXOSC7, EXOSC8 and EXOSC9; within the complex interacts with EXOSC5 and EXOSC9. The catalytically inactive RNA exosome core complex (Exo-9) associates with the catalytic subunit EXOSC10/RRP6. Exo-9 may associate with DIS3 to form the nucleolar exosome complex, or DIS3L to form the cytoplasmic exosome complex. Exo-9 is formed by a hexameric base ring consisting of the heterodimers EXOSC4-EXOSC9, EXOSC5-EXOSC8 and EXOSC6-EXOSC7, and a cap ring consisting of EXOSC1, EXOSC2 and EXOSC3. The RNA exosome complex associates with cofactors C1D/RRP47, MPHOSPH6/MPP6 and MTREX/MTR4. Interacts with MPHOSPH6/MPP6; the interaction is direct. Interacts with GTPBP1. Interacts with ZC3HAV1. Interacts with DDX17 only in the presence of ZC3HAV1 in an RNA-independent manner. Interacts with DHX36; this interaction occurs in a RNase-insensitive manner. Interacts with HBS1L isoform 2.

Its subcellular location is the cytoplasm. It is found in the nucleus. The protein localises to the nucleolus. Functionally, non-catalytic component of the RNA exosome complex which has 3'-&gt;5' exoribonuclease activity and participates in a multitude of cellular RNA processing and degradation events. In the nucleus, the RNA exosome complex is involved in proper maturation of stable RNA species such as rRNA, snRNA and snoRNA, in the elimination of RNA processing by-products and non-coding 'pervasive' transcripts, such as antisense RNA species and promoter-upstream transcripts (PROMPTs), and of mRNAs with processing defects, thereby limiting or excluding their export to the cytoplasm. The RNA exosome may be involved in Ig class switch recombination (CSR) and/or Ig variable region somatic hypermutation (SHM) by targeting AICDA deamination activity to transcribed dsDNA substrates. In the cytoplasm, the RNA exosome complex is involved in general mRNA turnover and specifically degrades inherently unstable mRNAs containing AU-rich elements (AREs) within their 3' untranslated regions, and in RNA surveillance pathways, preventing translation of aberrant mRNAs. It seems to be involved in degradation of histone mRNA. The catalytic inactive RNA exosome core complex of 9 subunits (Exo-9) is proposed to play a pivotal role in the binding and presentation of RNA for ribonucleolysis, and to serve as a scaffold for the association with catalytic subunits and accessory proteins or complexes. EXOSC3 as peripheral part of the Exo-9 complex stabilizes the hexameric ring of RNase PH-domain subunits through contacts with EXOSC9 and EXOSC5. The sequence is that of Exosome complex component RRP40 (EXOSC3) from Homo sapiens (Human).